The following is a 180-amino-acid chain: Large ribosomal subunit protein uL5 (180 aa).

The protein belongs to the universal ribosomal protein uL5 family. As to quaternary structure, part of the 50S ribosomal subunit; part of the 5S rRNA/L5/L18/L25 subcomplex. Contacts the 5S rRNA and the P site tRNA. Forms a bridge to the 30S subunit in the 70S ribosome.

Functionally, this is one of the proteins that bind and probably mediate the attachment of the 5S RNA into the large ribosomal subunit, where it forms part of the central protuberance. In the 70S ribosome it contacts protein S13 of the 30S subunit (bridge B1b), connecting the 2 subunits; this bridge is implicated in subunit movement. Contacts the P site tRNA; the 5S rRNA and some of its associated proteins might help stabilize positioning of ribosome-bound tRNAs. This is Large ribosomal subunit protein uL5 from Gloeothece citriformis (strain PCC 7424) (Cyanothece sp. (strain PCC 7424)).